The chain runs to 214 residues: Phosphopantothenoylcysteine decarboxylase HAL3 (214 aa).

FMN-binding positions include 30-32 and 55-57; these read GSV and TRA. Residue histidine 92 is the Proton donor of the active site. FMN contacts are provided by residues 108–111 and alanine 142; that span reads SANT. 3 residues coordinate N-[(R)-4-phosphopantothenoyl]-L-cysteine: asparagine 144, arginine 174, and alanine 176. Cysteine 177 (proton donor) is an active-site residue. Methionine 185 provides a ligand contact to N-[(R)-4-phosphopantothenoyl]-L-cysteine.

This sequence belongs to the HFCD (homooligomeric flavin containing Cys decarboxylase) superfamily. Homotrimer. The cofactor is FMN. Mainly expressed in stems, to a lower extent in flowers, leaves and fruits, and at basal levels in roots.

The protein resides in the cell membrane. It is found in the cytoplasm. The enzyme catalyses N-[(R)-4-phosphopantothenoyl]-L-cysteine + H(+) = (R)-4'-phosphopantetheine + CO2. It functions in the pathway cofactor biosynthesis; coenzyme A biosynthesis; CoA from (R)-pantothenate: step 3/5. Functionally, involved in plant growth, and promotes salt and osmotic tolerance, probably via coenzyme A (CoA) accumulation and endogenous proline accumulation. Catalyzes the decarboxylation of 4'-phosphopantothenoylcysteine to 4'-phosphopantetheine, a key step in coenzyme A biosynthesis. Required for roots development. The sequence is that of Phosphopantothenoylcysteine decarboxylase HAL3 from Malus domestica (Apple).